We begin with the raw amino-acid sequence, 384 residues long: Putative dioxygenase SSO1533 (384 aa).

Residues histidine 296, glutamate 302, and histidine 332 each contribute to the Fe cation site.

The protein belongs to the homogentisate dioxygenase family. Fe cation serves as cofactor.

This chain is Putative dioxygenase SSO1533, found in Saccharolobus solfataricus (strain ATCC 35092 / DSM 1617 / JCM 11322 / P2) (Sulfolobus solfataricus).